A 597-amino-acid chain; its full sequence is MVEGRRRRRFSLSSQQLALLLLLLSFFLCFSVASPRAISDSDLLDETVANSSSSVASLNASSSSSLVKPKEGSFADIIDRALEKEFNESDQNEVADPGSFNNSVAGQQAVLETVARVKSTKKNETKEEKRFQLHDVFNLNNDNRAEDTPTLIDRKDNVFIISNSKSKYPVLQLDLRLISDLVVVIVSATCGGIAFACAGQPVITGYLLAGSIIGPGGLNFISEMVQVETVAQFGVVFLLFALGLEFSTAKLKVVRSVAVLGGLLQILLFMFLCGITVSLCGGKRSEGVFVGAFLSMSSTAVVLKFLMEKNSTNSLHGQVTIGILILQDCAVGLLFALLPVLEGNSGIVHGMLSIGKVVVLLLSFLAVLSILSRTCIPWLLKLMVSLSSQTNELYQLAAVAFCLLVAWCSDKLGLSLELGSFAAGVMISTTDLAEHTLEQIEPIRNLFAALFLASIGMLVNVHFLWTHVDILLASVILVIIIKTTIVTTVVKGFGYNNKTALLVGISLAQIGEFAFVLLSRASNLHLIEGKLYLLLLGTTALSLVTTPLVFKMIPAVVHLGILLKWFSPDSTIEKGEIVRSESGKQRMILMSRQSHSS.

An N-terminal signal peptide occupies residues 1 to 35; that stretch reads MVEGRRRRRFSLSSQQLALLLLLLSFFLCFSVASP. 12 helical membrane-spanning segments follow: residues 177–197, 201–221, 224–244, 257–277, 287–307, 321–341, 351–371, 396–416, 440–460, 461–481, 499–519, and 543–563; these read LISD…AFAC, PVIT…LNFI, MVQV…ALGL, VAVL…GITV, GVFV…KFLM, IGIL…LPVL, MLSI…LSIL, LAAV…GLSL, IEPI…MLVN, VHFL…VIII, TALL…VLLS, and LVTT…GILL.

It belongs to the monovalent cation:proton antiporter 2 (CPA2) transporter (TC 2.A.37) family. KEA (TC 2.A.37.1) subfamily. Expressed in roots, stems, leaves, flowers and silique.

It is found in the golgi apparatus membrane. It localises to the golgi apparatus. The protein localises to the trans-Golgi network membrane. Its subcellular location is the prevacuolar compartment membrane. The protein resides in the endomembrane system. The enzyme catalyses K(+)(in) + H(+)(out) = K(+)(out) + H(+)(in). Its function is as follows. Electroneutral K(+)/H(+) efflux antiporter involved in K(+) homeostasis and osmotic adjustment. Together with KEA4 and KEA5, promotes growth and development, and facilitates endosomal pH and ions homeostasis, as well as salt tolerance (e.g. K(+), NaCl and LiCl), probably by supporting cell wall biosynthesis during rapid etiolated seedling growth. The polypeptide is K(+) efflux antiporter 6 (Arabidopsis thaliana (Mouse-ear cress)).